The primary structure comprises 671 residues: Bifunctional acetylxylan esterase/xylanase XynS20E (671 aa).

The N-terminal stretch at 1 to 19 is a signal peptide; the sequence is MRLGVALSTIAVLLTATSA. The acetylxylan esterase stretch occupies residues 54–279; that stretch reads QGAGRDIHVY…IQDIWDFVSQ (226 aa). Ser152 (charge relay system) is an active-site residue. An N-linked (GlcNAc...) asparagine glycan is attached at Asn238. A disordered region spans residues 285–328; it reads PVSASGNGGGNTTPTNPSTGGNGNGNGGGNTTPTNPSTGGNGNG. Residues 304 to 314 show a composition bias toward gly residues; sequence GGNGNGNGGGN. 2 CBM10 domains span residues 335–374 and 383–422; these read KCSSNITKQGYKCCASNCEVVYTDSDGDWGVENDQWCGCG and TCSAKILQQGYKCCPSGCIIYYTDEDGTWGVNGEEWCGCG. N-linked (GlcNAc...) asparagine glycosylation occurs at Asn339. Residues Asn445 and Asn483 are each glycosylated (N-linked (GlcNAc...) asparagine). The region spanning 461–661 is the GH11 domain; the sequence is TVTSNKVGDI…NNGGTSGTAD (201 aa). Glu555 functions as the Nucleophile in the catalytic mechanism. Glu648 serves as the catalytic Proton donor.

It in the N-terminal section; belongs to the axeA family. This sequence in the C-terminal section; belongs to the glycosyl hydrolase 11 (cellulase G) family.

The protein localises to the secreted. It carries out the reaction Deacetylation of xylans and xylo-oligosaccharides.. It catalyses the reaction Endohydrolysis of (1-&gt;4)-beta-D-xylosidic linkages in xylans.. It participates in glycan degradation; xylan degradation. In terms of biological role, bifunctional acetylxylan esterase/xylanase involved in the hydrolysis of xylan, a major structural heterogeneous polysaccharide found in plant biomass representing the second most abundant polysaccharide in the biosphere, after cellulose. Degrades xylan from acetylxylan, beechwood, birchwood, and oat spelt, and releases acetate from 4-methylumbelliferyl acetate and beta-D-xylose tetraacetate. No activity is observed against carboxy methyl cellulose, beta-glucan, p-nitrophenol acetate, p-nitrophenol laurate, p-nitrophenol myristate, p-nitrophenol, palmitate, or beta-naphthol acetate. The chain is Bifunctional acetylxylan esterase/xylanase XynS20E (xynS20E) from Neocallimastix patriciarum (Rumen fungus).